The sequence spans 570 residues: Urease subunit alpha (570 aa).

The Urease domain occupies 132–570 (GGFDSHIHYI…LPLAQRYFLF (439 aa)). Ni(2+) contacts are provided by H137, H139, and K220. K220 is subject to N6-carboxylysine. H222 provides a ligand contact to substrate. Residues H249 and H275 each contribute to the Ni(2+) site. The active-site Proton donor is H323. D363 is a binding site for Ni(2+).

The protein belongs to the metallo-dependent hydrolases superfamily. Urease alpha subunit family. In terms of assembly, heterotrimer of UreA (gamma), UreB (beta) and UreC (alpha) subunits. Three heterotrimers associate to form the active enzyme. It depends on Ni cation as a cofactor. In terms of processing, carboxylation allows a single lysine to coordinate two nickel ions.

It is found in the cytoplasm. The catalysed reaction is urea + 2 H2O + H(+) = hydrogencarbonate + 2 NH4(+). It functions in the pathway nitrogen metabolism; urea degradation; CO(2) and NH(3) from urea (urease route): step 1/1. The chain is Urease subunit alpha from Ruegeria sp. (strain TM1040) (Silicibacter sp.).